The primary structure comprises 300 residues: Cation-efflux pump FieF (300 aa).

A helical transmembrane segment spans residues 24–44 (LLIKIFAWWYTGSVSILAALV). Zn(2+)-binding residues include Asp45 and Asp49. Transmembrane regions (helical) follow at residues 82–102 (AALAQSMFISGSALFLFLTSI) and 114–134 (PGVGIGVTVIALICTIILVTF). The Zn(2+) site is built by His153 and Asp157. 2 consecutive transmembrane segments (helical) span residues 156–176 (SDVMMNGAILIALGLSWYGWH) and 178–198 (ADALFALGIGIYILYSALRMG).

The protein belongs to the cation diffusion facilitator (CDF) transporter (TC 2.A.4) family. FieF subfamily. Homodimer.

Its subcellular location is the cell inner membrane. It catalyses the reaction Zn(2+)(in) + H(+)(out) = Zn(2+)(out) + H(+)(in). The enzyme catalyses Cd(2+)(in) + H(+)(out) = Cd(2+)(out) + H(+)(in). The catalysed reaction is Fe(2+)(in) + H(+)(out) = Fe(2+)(out) + H(+)(in). Functionally, divalent metal cation transporter which exports Zn(2+), Cd(2+) and possibly Fe(2+). May be involved in zinc and iron detoxification by efflux. The sequence is that of Cation-efflux pump FieF from Salmonella schwarzengrund (strain CVM19633).